Consider the following 523-residue polypeptide: Galactarate dehydratase (L-threo-forming) (523 aa).

This sequence belongs to the UxaA family. Homodimer. It depends on Fe(2+) as a cofactor.

It catalyses the reaction galactarate = 5-dehydro-4-deoxy-D-glucarate + H2O. It functions in the pathway carbohydrate acid metabolism; galactarate degradation; D-glycerate from galactarate: step 1/3. Its function is as follows. Catalyzes the dehydration of galactarate to form 5-dehydro-4-deoxy-D-glucarate (5-KDG). The sequence is that of Galactarate dehydratase (L-threo-forming) from Escherichia coli (strain K12).